The chain runs to 447 residues: MMDMKENDQKRNDMMDMKSHDERKNLNSSQGKNEITFPKVLDPKKDNNGYKSYTLKAQKGKTEFYKGNFSNTLGYNGNLLGPTLKLKKGDKVKIKLVNNLDENTTFHWHGLEIDGKVDGGPSQVIKPGKEKTIKFEVKQEAATLWYHPHPSPNTAKQVYNGLSGLLYIEDDKKNNYPSNYGKNDLPIIIQDKTFVSKKLNYTKTKDEDGTQGDTVLVNGKVDPKLTTKEGKIRLRLLNGSNARDLNLKLSNNQSFEYIASEGGHLEKTKKLKEINLAPSARKEIVIDLSKMKEDKVNLVDNDETVILPIINKEKSTNKDTTPKVDKKIKLEGMDDNVTINGKKFDPNRIDFTQKVNRKETWEIENVKDKMSGMKHPFHIHGTQFKVLSVDGKKPSEDMRGKKDVISLEPGQKAKIEVVFKNTGTYMFHCHILEHEDNGMMGQIKVTK.

The span at 1 to 25 (MMDMKENDQKRNDMMDMKSHDERKN) shows a compositional bias: basic and acidic residues. The tract at residues 1-43 (MMDMKENDQKRNDMMDMKSHDERKNLNSSQGKNEITFPKVLDP) is disordered. Cu cation is bound by residues H107, H109, H147, H149, H375, H378, H380, H428, C429, H430, H434, and M439.

The protein belongs to the multicopper oxidase family. Requires Cu cation as cofactor.

It is found in the cytoplasm. In terms of biological role, may be involved in copper homeostasis and oxidative stress response. Oxidizes the substrate 3,3'-dimethoxybenzidine in vitro. Also possesses low levels of phenoloxidase and ferroxidase activities. This Staphylococcus aureus protein is Multicopper oxidase mco (mco).